A 204-amino-acid chain; its full sequence is Small ribosomal subunit protein uS4 (204 aa).

Residues 20 to 46 form a disordered region; it reads WGRPKSPINKREYGPGEHGQRRRKPSD. A compositionally biased stretch (basic and acidic residues) spans 28–38; the sequence is NKREYGPGEHG. The region spanning 93 to 156 is the S4 RNA-binding domain; sequence TRLDAVVYRM…RQMPLILEAL (64 aa).

It belongs to the universal ribosomal protein uS4 family. Part of the 30S ribosomal subunit. Contacts protein S5. The interaction surface between S4 and S5 is involved in control of translational fidelity.

One of the primary rRNA binding proteins, it binds directly to 16S rRNA where it nucleates assembly of the body of the 30S subunit. Its function is as follows. With S5 and S12 plays an important role in translational accuracy. The protein is Small ribosomal subunit protein uS4 of Rhodospirillum rubrum (strain ATCC 11170 / ATH 1.1.1 / DSM 467 / LMG 4362 / NCIMB 8255 / S1).